Reading from the N-terminus, the 223-residue chain is uncharacterized protein (223 aa).

A disordered region spans residues 117–148; sequence THAHTHAHTHGHTHTRAHSTHAHTHAHSHYHT.

This is an uncharacterized protein from Homo sapiens (Human).